The chain runs to 211 residues: Redox-sensing transcriptional repressor Rex (211 aa).

Residues 17 to 56 (LYYRFVSILKGKGIDRVNSKTISEALQIDSATIRRDFSYF) constitute a DNA-binding region (H-T-H motif). Position 91-96 (91-96 (GIGNLG)) interacts with NAD(+).

This sequence belongs to the transcriptional regulatory Rex family. In terms of assembly, homodimer.

The protein resides in the cytoplasm. Functionally, modulates transcription in response to changes in cellular NADH/NAD(+) redox state. This Staphylococcus epidermidis (strain ATCC 35984 / DSM 28319 / BCRC 17069 / CCUG 31568 / BM 3577 / RP62A) protein is Redox-sensing transcriptional repressor Rex.